Reading from the N-terminus, the 416-residue chain is Glutamyl-tRNA reductase (416 aa).

Substrate contacts are provided by residues 49-52, Ser105, 110-112, and Gln116; these read TCNR and EPQ. Residue Cys50 is the Nucleophile of the active site. Position 185-190 (185-190) interacts with NADP(+); the sequence is GAGETI.

It belongs to the glutamyl-tRNA reductase family. Homodimer.

The catalysed reaction is (S)-4-amino-5-oxopentanoate + tRNA(Glu) + NADP(+) = L-glutamyl-tRNA(Glu) + NADPH + H(+). The protein operates within porphyrin-containing compound metabolism; protoporphyrin-IX biosynthesis; 5-aminolevulinate from L-glutamyl-tRNA(Glu): step 1/2. Catalyzes the NADPH-dependent reduction of glutamyl-tRNA(Glu) to glutamate 1-semialdehyde (GSA). This is Glutamyl-tRNA reductase from Shewanella sp. (strain MR-7).